Here is a 459-residue protein sequence, read N- to C-terminus: UDP-glycosyltransferase 78D3 (459 aa).

UDP-alpha-D-glucose is bound by residues 338–340 (APQ), 355–363 (HGGWNSVLE), and 377–380 (FGDH).

The protein belongs to the UDP-glycosyltransferase family.

Functionally, possesses low quercetin 3-O-glucosyltransferase activity in vitro. This is UDP-glycosyltransferase 78D3 (UGT78D3) from Arabidopsis thaliana (Mouse-ear cress).